A 62-amino-acid polypeptide reads, in one-letter code: UPF0370 protein plu2724 (62 aa).

The helical transmembrane segment at 3–23 threads the bilayer; sequence WLADYWWIILILLVGVLLNAI. Residues 36-62 are disordered; that stretch reads DNKPELPPHRDLNSKWDDEDDWPQKKP.

It belongs to the UPF0370 family.

It localises to the cell membrane. The sequence is that of UPF0370 protein plu2724 from Photorhabdus laumondii subsp. laumondii (strain DSM 15139 / CIP 105565 / TT01) (Photorhabdus luminescens subsp. laumondii).